A 413-amino-acid polypeptide reads, in one-letter code: L-cysteine:1D-myo-inositol 2-amino-2-deoxy-alpha-D-glucopyranoside ligase (413 aa).

Residue cysteine 15 coordinates Zn(2+). Residues 15-18 (CGIT), threonine 30, and 53-55 (NVT) each bind L-cysteinyl-5'-AMP. The short motif at 17–27 (ITPYDATHLGH) is the 'HIGH' region element. The 'ERGGDP' region signature appears at 155–160 (ERGGDP). Tryptophan 195 provides a ligand contact to L-cysteinyl-5'-AMP. Cysteine 199 contributes to the Zn(2+) binding site. 217–219 (GTD) contacts L-cysteinyl-5'-AMP. Position 224 (histidine 224) interacts with Zn(2+). Valine 251 contributes to the L-cysteinyl-5'-AMP binding site. The 'KMSKS' region signature appears at 257-261 (KMSKS).

It belongs to the class-I aminoacyl-tRNA synthetase family. MshC subfamily. As to quaternary structure, monomer. It depends on Zn(2+) as a cofactor.

It carries out the reaction 1D-myo-inositol 2-amino-2-deoxy-alpha-D-glucopyranoside + L-cysteine + ATP = 1D-myo-inositol 2-(L-cysteinylamino)-2-deoxy-alpha-D-glucopyranoside + AMP + diphosphate + H(+). In terms of biological role, catalyzes the ATP-dependent condensation of GlcN-Ins and L-cysteine to form L-Cys-GlcN-Ins. This chain is L-cysteine:1D-myo-inositol 2-amino-2-deoxy-alpha-D-glucopyranoside ligase, found in Frankia alni (strain DSM 45986 / CECT 9034 / ACN14a).